The primary structure comprises 450 residues: Neutral protease 2 homolog AFUB_070680 (450 aa).

Residues 1-19 (MKITALASAILAVAQGALA) form the signal peptide. The propeptide occupies 20-172 (LPARAPALDI…PASIKPLDRR (153 aa)). Cystine bridges form between C179–C251 and C258–C276. A Zn(2+)-binding site is contributed by H300. E301 is a catalytic residue. H304 and D315 together coordinate Zn(2+). The span at 364–392 (QPGQTEPGTQTMWDGYSQPGQTEPGTQTM) shows a compositional bias: polar residues. The disordered stretch occupies residues 364-416 (QPGQTEPGTQTMWDGYSQPGQTEPGTQTMWDGYSQPGQTEPGTQTTWDGYSQP). A compositionally biased stretch (low complexity) spans 398 to 409 (QPGQTEPGTQTT).

This sequence belongs to the peptidase M35 family. Requires Zn(2+) as cofactor.

It localises to the secreted. The enzyme catalyses Preferential cleavage of bonds with hydrophobic residues in P1'. Also 3-Asn-|-Gln-4 and 8-Gly-|-Ser-9 bonds in insulin B chain.. Its function is as follows. Secreted metalloproteinase that allows assimilation of proteinaceous substrates. Shows high activities on basic nuclear substrates such as histone and protamine. May be involved in virulence. The protein is Neutral protease 2 homolog AFUB_070680 of Aspergillus fumigatus (strain ATCC MYA-4609 / CBS 101355 / FGSC A1100 / Af293) (Neosartorya fumigata).